Reading from the N-terminus, the 767-residue chain is DNA topoisomerase 1 (767 aa).

Over residues 1–23 (MSGDHLHNDSQIEADFRLNDSHK) the composition is skewed to basic and acidic residues. The disordered stretch occupies residues 1–200 (MSGDHLHNDS…DNKKKKAKKE (200 aa)). Ser2 is subject to N-acetylserine. Ser2 and Ser10 each carry phosphoserine. The span at 24 to 39 (HKDKHKDREHRHKEHK) shows a compositional bias: basic residues. Positions 40-110 (KDKDKDREKS…DAKIKKEKEN (71 aa)) are enriched in basic and acidic residues. Residue Ser59 is modified to Phosphoserine. Lys103 is covalently cross-linked (Glycyl lysine isopeptide (Lys-Gly) (interchain with G-Cter in SUMO2)). Residue Lys105 forms a Glycyl lysine isopeptide (Lys-Gly) (interchain with G-Cter in SUMO); alternate linkage. Lys105 participates in a covalent cross-link: Glycyl lysine isopeptide (Lys-Gly) (interchain with G-Cter in SUMO2); alternate. Phosphoserine is present on Ser114. Residue Lys119 forms a Glycyl lysine isopeptide (Lys-Gly) (interchain with G-Cter in SUMO); alternate linkage. Residue Lys119 forms a Glycyl lysine isopeptide (Lys-Gly) (interchain with G-Cter in SUMO2); alternate linkage. Lys119 participates in a covalent cross-link: Glycyl lysine isopeptide (Lys-Gly) (interchain with G-Cter in SUMO1); alternate. Over residues 131 to 168 (PKEDIKPLKRPRDEDDADYKPKKIKTEDIKKEKKRKLE) the composition is skewed to basic and acidic residues. Glycyl lysine isopeptide (Lys-Gly) (interchain with G-Cter in SUMO2) cross-links involve residues Lys136 and Lys150. Residue Lys155 forms a Glycyl lysine isopeptide (Lys-Gly) (interchain with G-Cter in SUMO); alternate linkage. Lys155 participates in a covalent cross-link: Glycyl lysine isopeptide (Lys-Gly) (interchain with G-Cter in SUMO2); alternate. Residues Lys160 and Lys166 each participate in a glycyl lysine isopeptide (Lys-Gly) (interchain with G-Cter in SUMO2) cross-link. Lys174 participates in a covalent cross-link: Glycyl lysine isopeptide (Lys-Gly) (interchain with G-Cter in SUMO2); alternate. Lys174 carries the N6-acetyllysine; alternate modification. Over residues 181–200 (KDKDKKVAEPDNKKKKAKKE) the composition is skewed to basic and acidic residues. A Glycyl lysine isopeptide (Lys-Gly) (interchain with G-Cter in SUMO2) cross-link involves residue Lys206. Lys282 bears the N6-acetyllysine mark. Lys338 participates in a covalent cross-link: Glycyl lysine isopeptide (Lys-Gly) (interchain with G-Cter in SUMO2). Interaction with DNA stretches follow at residues 427-428 (KY) and 490-495 (RAGNEK). One can recognise a Topo IB-type catalytic domain in the interval 434-767 (SSRIKGEKDW…IDMTDEDYEF (334 aa)). A Phosphoserine; by CK2 modification is found at Ser508. A Glycyl lysine isopeptide (Lys-Gly) (interchain with G-Cter in SUMO2) cross-link involves residue Lys551. Residues 587 to 589 (TAK) are interaction with DNA. Residues Lys644, Lys702, and Lys714 each participate in a glycyl lysine isopeptide (Lys-Gly) (interchain with G-Cter in SUMO2) cross-link. The O-(3'-phospho-DNA)-tyrosine intermediate role is filled by Tyr725.

Belongs to the type IB topoisomerase family. In terms of assembly, monomer. Interacts with ERCC6. Interacts with TPRN; TPRN interacts with a number of DNA damage response proteins, is recruited to sites of DNA damage and may play a role in DNA damage repair. In terms of processing, sumoylated. Lys-119 is the main site of sumoylation. Sumoylation plays a role in partitioning TOP1 between nucleoli and nucleoplasm. Levels are dramatically increased on camptothecin (CPT) treatment. Phosphorylation at Ser-508 by CK2 increases binding to supercoiled DNA and sensitivity to camptothecin.

Its subcellular location is the nucleus. The protein resides in the nucleolus. The protein localises to the nucleoplasm. The catalysed reaction is ATP-independent breakage of single-stranded DNA, followed by passage and rejoining.. In terms of biological role, releases the supercoiling and torsional tension of DNA introduced during the DNA replication and transcription by transiently cleaving and rejoining one strand of the DNA duplex. Introduces a single-strand break via transesterification at a target site in duplex DNA. The scissile phosphodiester is attacked by the catalytic tyrosine of the enzyme, resulting in the formation of a DNA-(3'-phosphotyrosyl)-enzyme intermediate and the expulsion of a 5'-OH DNA strand. The free DNA strand then rotates around the intact phosphodiester bond on the opposing strand, thus removing DNA supercoils. Finally, in the religation step, the DNA 5'-OH attacks the covalent intermediate to expel the active-site tyrosine and restore the DNA phosphodiester backbone. Regulates the alternative splicing of tissue factor (F3) pre-mRNA in endothelial cells. Involved in the circadian transcription of the core circadian clock component BMAL1 by altering the chromatin structure around the ROR response elements (ROREs) on the BMAL1 promoter. The protein is DNA topoisomerase 1 (Top1) of Rattus norvegicus (Rat).